We begin with the raw amino-acid sequence, 303 residues long: NAC domain-containing protein 48 (303 aa).

The NAC domain maps to 9–159 (LPPGFRFHPT…DWVLCRIYNK (151 aa)).

As to quaternary structure, interacts with NAC071. Widely expressed.

Its subcellular location is the nucleus. Transcription activator that binds to the promoter of the stress response gene LEA19. Involved in tolerance to abiotic stresses. Transcription activator involved in response to abiotic and biotic stresses. Involved in drought and salt stress responses, and defense response to the rice blast fungus. Transcription activator involved tolerance to cold and salt stresses. Transcription activator involved in tolerance to drought stress. Targets directly and activates genes involved in membrane modification, nicotianamine (NA) biosynthesis, glutathione relocation, accumulation of phosphoadenosine phosphosulfate and glycosylation in roots. Controls root growth at early vegetative stage through chromatin modification and histone lysine deacytaltion by HDAC1. The protein is NAC domain-containing protein 48 of Oryza sativa subsp. japonica (Rice).